A 419-amino-acid polypeptide reads, in one-letter code: Phospho-N-acetylmuramoyl-pentapeptide-transferase (419 aa).

10 consecutive transmembrane segments (helical) span residues 22-42 (YVSF…TVIG), 72-92 (TPTM…LLLA), 99-119 (ILLM…DDYI), 135-155 (IIGQ…NPAV), 208-228 (VLFG…FISN), 238-258 (GLAT…AYVS), 278-298 (LTIF…YNAY), 303-323 (FMGD…ALII), 328-348 (LLPI…IQVF), and 396-416 (KITV…IATL).

It belongs to the glycosyltransferase 4 family. MraY subfamily. Requires Mg(2+) as cofactor.

It is found in the cell inner membrane. It carries out the reaction UDP-N-acetyl-alpha-D-muramoyl-L-alanyl-gamma-D-glutamyl-meso-2,6-diaminopimeloyl-D-alanyl-D-alanine + di-trans,octa-cis-undecaprenyl phosphate = di-trans,octa-cis-undecaprenyl diphospho-N-acetyl-alpha-D-muramoyl-L-alanyl-D-glutamyl-meso-2,6-diaminopimeloyl-D-alanyl-D-alanine + UMP. It functions in the pathway cell wall biogenesis; peptidoglycan biosynthesis. Its function is as follows. Catalyzes the initial step of the lipid cycle reactions in the biosynthesis of the cell wall peptidoglycan: transfers peptidoglycan precursor phospho-MurNAc-pentapeptide from UDP-MurNAc-pentapeptide onto the lipid carrier undecaprenyl phosphate, yielding undecaprenyl-pyrophosphoryl-MurNAc-pentapeptide, known as lipid I. The polypeptide is Phospho-N-acetylmuramoyl-pentapeptide-transferase (Porphyromonas gingivalis (strain ATCC BAA-308 / W83)).